Reading from the N-terminus, the 284-residue chain is Bifunctional protein FolD (284 aa).

NADP(+) contacts are provided by residues 165-167 (GRS), S190, and V231.

It belongs to the tetrahydrofolate dehydrogenase/cyclohydrolase family. Homodimer.

It carries out the reaction (6R)-5,10-methylene-5,6,7,8-tetrahydrofolate + NADP(+) = (6R)-5,10-methenyltetrahydrofolate + NADPH. The enzyme catalyses (6R)-5,10-methenyltetrahydrofolate + H2O = (6R)-10-formyltetrahydrofolate + H(+). It functions in the pathway one-carbon metabolism; tetrahydrofolate interconversion. Catalyzes the oxidation of 5,10-methylenetetrahydrofolate to 5,10-methenyltetrahydrofolate and then the hydrolysis of 5,10-methenyltetrahydrofolate to 10-formyltetrahydrofolate. The sequence is that of Bifunctional protein FolD from Geobacillus thermodenitrificans (strain NG80-2).